The following is a 247-amino-acid chain: MSKLFWAMLSFITRLPVPRRWSQGLDFEHYSRGIITFPLIGLLLGAISGLVFMVLQAWCGAPLAALFSVLVLVLMTGGFHLDGLADTCDGVFSARSRDRMLEIMRDSRLGTHGGLALIFVVLAKILVLSELALRGEPILASLAAACAISRGTAALLMYRHRYAREEGLGNVFIGKIDGRQTCVTLGLAAIFAAVLLPGMHGVAAMVVTMVAIFILGQLLKRTLGGQTGDTLGAAIELGELVFLLALL.

5 helical membrane-spanning segments follow: residues I34–V54, C59–F79, G113–L133, I138–Y158, and V194–I214.

The protein belongs to the CobS family. Mg(2+) is required as a cofactor.

The protein localises to the cell inner membrane. It carries out the reaction alpha-ribazole + adenosylcob(III)inamide-GDP = adenosylcob(III)alamin + GMP + H(+). It catalyses the reaction alpha-ribazole 5'-phosphate + adenosylcob(III)inamide-GDP = adenosylcob(III)alamin 5'-phosphate + GMP + H(+). The protein operates within cofactor biosynthesis; adenosylcobalamin biosynthesis; adenosylcobalamin from cob(II)yrinate a,c-diamide: step 7/7. In terms of biological role, joins adenosylcobinamide-GDP and alpha-ribazole to generate adenosylcobalamin (Ado-cobalamin). Also synthesizes adenosylcobalamin 5'-phosphate from adenosylcobinamide-GDP and alpha-ribazole 5'-phosphate. The sequence is that of Adenosylcobinamide-GDP ribazoletransferase from Escherichia coli O45:K1 (strain S88 / ExPEC).